Consider the following 157-residue polypeptide: uncharacterized protein (157 aa).

The first 17 residues, 1-17 (MSMKTKAAFHLVLFGLA), serve as a signal peptide directing secretion. Cys-18 carries the N-palmitoyl cysteine lipid modification. Residue Cys-18 is the site of S-diacylglycerol cysteine attachment. The next 3 helical transmembrane spans lie at 42–64 (MVFD…YLYL), 98–120 (ASYI…YPLF), and 124–146 (IPFF…YVIS).

The protein resides in the cell membrane. This is an uncharacterized protein from Bacillus subtilis (strain 168).